We begin with the raw amino-acid sequence, 119 residues long: Ribonuclease P protein component (119 aa).

Belongs to the RnpA family. In terms of assembly, consists of a catalytic RNA component (M1 or rnpB) and a protein subunit.

The enzyme catalyses Endonucleolytic cleavage of RNA, removing 5'-extranucleotides from tRNA precursor.. Its function is as follows. RNaseP catalyzes the removal of the 5'-leader sequence from pre-tRNA to produce the mature 5'-terminus. It can also cleave other RNA substrates such as 4.5S RNA. The protein component plays an auxiliary but essential role in vivo by binding to the 5'-leader sequence and broadening the substrate specificity of the ribozyme. In Pediococcus pentosaceus (strain ATCC 25745 / CCUG 21536 / LMG 10740 / 183-1w), this protein is Ribonuclease P protein component.